The chain runs to 502 residues: Maturase K (502 aa).

This sequence belongs to the intron maturase 2 family. MatK subfamily.

It is found in the plastid. The protein localises to the chloroplast. Functionally, usually encoded in the trnK tRNA gene intron. Probably assists in splicing its own and other chloroplast group II introns. The protein is Maturase K of Brassica campestris (Field mustard).